The sequence spans 214 residues: Adenylate kinase (214 aa).

10-15 (GAGKGT) contributes to the ATP binding site. The NMP stretch occupies residues 30–59 (STGDMLRAAVKAGTELGKQAKEIMDAGKLV). AMP contacts are provided by residues threonine 31, arginine 36, 57–59 (KLV), 85–88 (GFPR), and glutamine 92. The LID stretch occupies residues 122-159 (GRRVHAASGRVYHVKFNPPKVEGKDDVTGEDLTIRKDD). ATP-binding positions include arginine 123 and 132–133 (VY). Residues arginine 156 and arginine 167 each coordinate AMP. Residue arginine 200 coordinates ATP.

This sequence belongs to the adenylate kinase family. As to quaternary structure, monomer.

It localises to the cytoplasm. It carries out the reaction AMP + ATP = 2 ADP. It participates in purine metabolism; AMP biosynthesis via salvage pathway; AMP from ADP: step 1/1. Catalyzes the reversible transfer of the terminal phosphate group between ATP and AMP. Plays an important role in cellular energy homeostasis and in adenine nucleotide metabolism. The sequence is that of Adenylate kinase from Pectobacterium carotovorum subsp. carotovorum (strain PC1).